We begin with the raw amino-acid sequence, 247 residues long: Carboxy-S-adenosyl-L-methionine synthase (247 aa).

Residues Tyr40, 65–67 (GCS), 90–91 (DN), 122–123 (DI), Asn137, and Arg204 contribute to the S-adenosyl-L-methionine site.

It belongs to the class I-like SAM-binding methyltransferase superfamily. Cx-SAM synthase family. In terms of assembly, homodimer.

The enzyme catalyses prephenate + S-adenosyl-L-methionine = carboxy-S-adenosyl-L-methionine + 3-phenylpyruvate + H2O. Catalyzes the conversion of S-adenosyl-L-methionine (SAM) to carboxy-S-adenosyl-L-methionine (Cx-SAM). This chain is Carboxy-S-adenosyl-L-methionine synthase, found in Stutzerimonas stutzeri (strain A1501) (Pseudomonas stutzeri).